The primary structure comprises 485 residues: Cytochrome P450 monooxygenase tndB (485 aa).

The chain crosses the membrane as a helical span at residues 20 to 40; sequence VYGISAVIAVGLAIYSASLAI. A heme-binding site is contributed by cysteine 481.

It belongs to the cytochrome P450 family. The cofactor is heme.

Its subcellular location is the membrane. It functions in the pathway secondary metabolite biosynthesis; terpenoid biosynthesis. Functionally, cytochrome P450 monooxygenase; part of the gene cluster that mediates the biosynthesis of talaronoid C, a fusicoccane diterpenoid with an unprecedented tricyclic 5/8/6 ring system. The first step in the pathway is performed by the fusicoccadiene synthase tndC that possesses both prenyl transferase and terpene cyclase activity, converting isopentenyl diphosphate and dimethylallyl diphosphate into geranylgeranyl diphosphate (GGDP) and further converting GGDP into talarodiene, a precursor for talaronoid C. The remaining enzymes from the cluster include the cytochrome P450 monooxygenase tndB, the aldehyde reductase tndE and the alcohol dehydrogenase tndF that are involved in the conversion of talarodiene into talaronoid C. The polypeptide is Cytochrome P450 monooxygenase tndB (Aspergillus flavipes).